Reading from the N-terminus, the 546-residue chain is Capsid protein VP1 (546 aa).

A disordered region spans residues 1 to 38 (MMMASKDAPQSADGASGAGQLVPEVNTADPLPMEPVAG). The tract at residues 1 to 226 (MMMASKDAPQ…FLFLVPPTIE (226 aa)) is shell domain. Positions 227–279 (QKTRAFTVPNIPLQTLSNSRFPSLIQGMILSPDASQVVQFQNGRCLIDGQLLG) are P1 sub-domain 1. Residues 227–545 (QKTRAFTVPN…TARGRLGVRR (319 aa)) are protruding domain. The tract at residues 280–416 (TTPATSGQLF…GSSLSQAANL (137 aa)) is P2 sub-domain. The P1 sub-domain 2 stretch occupies residues 417-546 (APPVFPPGFG…ARGRLGVRRI (130 aa)). The segment at 538–545 (RGRLGVRR) is plays a role in binding to host histo-blood group structures antigens and in the formation of P-particles.

The protein belongs to the caliciviridae capsid protein family. Homodimer. Homomultimer. Interacts with the minor capsid protein VP2. Interacts (via C-terminus) with host type I histo-blood group structures antigens at the surface of target cells. In terms of processing, may be cleaved by host protease to generate soluble capsid protein. Assembled capsid cannot be cleaved.

The protein resides in the virion. The protein localises to the host cytoplasm. Its function is as follows. Capsid protein self assembles to form an icosahedral capsid with a T=3 symmetry, about 38 nm in diameter, and consisting of 180 capsid proteins. A smaller form of capsid with a diameter of 23 nm might be capsid proteins assembled as icosahedron with T=1 symmetry. The capsid encapsulates the genomic RNA and is decorated with VP2 proteins. Attaches virion to target cells by binding histo-blood group antigens (HBGAs) present on gastroduodenal epithelial cells. The soluble capsid protein may play a role in viral immunoevasion. In Southampton virus (strain GI/Human/United Kingdom/Southampton/1991) (SHV), this protein is Capsid protein VP1.